A 318-amino-acid polypeptide reads, in one-letter code: tRNA-cytidine(32) 2-sulfurtransferase (318 aa).

The disordered stretch occupies residues 1-29 (MNHVSSTKPDTAPSKHLTSSHIDATDQNN). Polar residues predominate over residues 16–27 (HLTSSHIDATDQ). A PP-loop motif motif is present at residues 64-69 (SGGKDS). Residues Cys139, Cys142, and Cys230 each contribute to the [4Fe-4S] cluster site.

This sequence belongs to the TtcA family. As to quaternary structure, homodimer. The cofactor is Mg(2+). It depends on [4Fe-4S] cluster as a cofactor.

It is found in the cytoplasm. The catalysed reaction is cytidine(32) in tRNA + S-sulfanyl-L-cysteinyl-[cysteine desulfurase] + AH2 + ATP = 2-thiocytidine(32) in tRNA + L-cysteinyl-[cysteine desulfurase] + A + AMP + diphosphate + H(+). It participates in tRNA modification. Functionally, catalyzes the ATP-dependent 2-thiolation of cytidine in position 32 of tRNA, to form 2-thiocytidine (s(2)C32). The sulfur atoms are provided by the cysteine/cysteine desulfurase (IscS) system. This chain is tRNA-cytidine(32) 2-sulfurtransferase, found in Pseudoalteromonas atlantica (strain T6c / ATCC BAA-1087).